Here is a 396-residue protein sequence, read N- to C-terminus: Putative pyridoxal phosphate-dependent acyltransferase (396 aa).

Position 111-112 (111-112) interacts with pyridoxal 5'-phosphate; the sequence is GF. Position 136 (H136) interacts with substrate. Residues S186, 211–214, and 241–244 each bind pyridoxal 5'-phosphate; these read DDAH and TLSK. The residue at position 244 (K244) is an N6-(pyridoxal phosphate)lysine. T358 serves as a coordination point for substrate.

The protein belongs to the class-II pyridoxal-phosphate-dependent aminotransferase family. As to quaternary structure, homodimer. Pyridoxal 5'-phosphate serves as cofactor.

The polypeptide is Putative pyridoxal phosphate-dependent acyltransferase (Bacillus cereus (strain ATCC 14579 / DSM 31 / CCUG 7414 / JCM 2152 / NBRC 15305 / NCIMB 9373 / NCTC 2599 / NRRL B-3711)).